Here is a 156-residue protein sequence, read N- to C-terminus: Small ribosomal subunit protein uS7 (156 aa).

The protein belongs to the universal ribosomal protein uS7 family. Part of the 30S ribosomal subunit. Contacts proteins S9 and S11.

Its function is as follows. One of the primary rRNA binding proteins, it binds directly to 16S rRNA where it nucleates assembly of the head domain of the 30S subunit. Is located at the subunit interface close to the decoding center, probably blocks exit of the E-site tRNA. The polypeptide is Small ribosomal subunit protein uS7 (Synechocystis sp. (strain ATCC 27184 / PCC 6803 / Kazusa)).